Consider the following 235-residue polypeptide: Cobalt transport protein CbiM (235 aa).

The N-terminal stretch at 1–33 (MRYLKFFLLLVFLVPSFGFSMHIMEGFLPPTHA) is a signal peptide. Transmembrane regions (helical) follow at residues 34 to 51 (LIWYILSLPFFVIGLFTI), 63 to 83 (MLLAFVGAFTFVLSAMKIPSV), 95 to 115 (LGAIIFGPFTMTVIGTIVLLF), 118 to 138 (LLLAHGGLTTLGANTFSMAIV), 156 to 176 (NIAVFLAAFLGDLFTYVTTSF), and 199 to 219 (IFAITQVPLAIIEGLVTVVVI).

Belongs to the CbiM family. As to quaternary structure, forms an energy-coupling factor (ECF) transporter complex composed of an ATP-binding protein (A component, CbiO), a transmembrane protein (T component, CbiQ) and 2 possible substrate-capture proteins (S components, CbiM and CbiN) of unknown stoichimetry.

It localises to the cell inner membrane. Its pathway is cofactor biosynthesis; adenosylcobalamin biosynthesis. Part of the energy-coupling factor (ECF) transporter complex CbiMNOQ involved in cobalt import. This chain is Cobalt transport protein CbiM, found in Thermosipho melanesiensis (strain DSM 12029 / CIP 104789 / BI429).